The sequence spans 199 residues: Phycocyanobilin lyase CpcT (199 aa).

Belongs to the CpcT/CpeT biliprotein lyase family.

Functionally, catalyzes the site-selective attachment of phycocyanobilin (PCB) to 'Cys-154' of C-phycocyanin subunit beta (CpcB) and to 'Cys-153' of phycoerythrocyanin subunit beta (PecB). Does not have chromophore lyase activity for ApcA1, ApcA2, ApcB, ApcD, ApcF or PecA. This Nostoc sp. (strain PCC 7120 / SAG 25.82 / UTEX 2576) protein is Phycocyanobilin lyase CpcT (cpcT1).